The primary structure comprises 479 residues: Altronate oxidoreductase (479 aa).

Position 18-29 (18-29 (IIQFGEGNFLRA)) interacts with NAD(+).

The protein belongs to the mannitol dehydrogenase family. UxaB subfamily.

The catalysed reaction is D-altronate + NAD(+) = keto-D-tagaturonate + NADH + H(+). Its pathway is carbohydrate metabolism; pentose and glucuronate interconversion. This Bacteroides thetaiotaomicron (strain ATCC 29148 / DSM 2079 / JCM 5827 / CCUG 10774 / NCTC 10582 / VPI-5482 / E50) protein is Altronate oxidoreductase.